A 37-amino-acid chain; its full sequence is Disintegrin morulustatin (37 aa).

3 cysteine pairs are disulfide-bonded: Cys12-Cys16, Cys22-Cys36, and Cys24-Cys31.

Belongs to the venom metalloproteinase (M12B) family. P-II subfamily. P-IIa sub-subfamily. As to expression, expressed by the venom gland.

Its subcellular location is the secreted. Its function is as follows. Inhibits ADP-induced platelet aggregation in human whole blood in a concentration-dependent manner (IC(50)=89.5 nM). The sequence is that of Disintegrin morulustatin from Crotalus morulus (Tamaulipan rock rattlesnake).